We begin with the raw amino-acid sequence, 79 residues long: Cytochrome c oxidase subunit 7A1, mitochondrial (79 aa).

A mitochondrion-targeting transit peptide spans methionine 1 to arginine 21. Topologically, residues phenylalanine 22 to glycine 46 are mitochondrial matrix. Residues isoleucine 47–serine 75 form a helical membrane-spanning segment. Residues phenylalanine 76 to asparagine 79 lie on the Mitochondrial intermembrane side of the membrane.

This sequence belongs to the cytochrome c oxidase VIIa family. In terms of assembly, component of the complex IV (CIV, cytochrome c oxidase), a multisubunit enzyme composed of 14 subunits. The complex is composed of a catalytic core of 3 subunits MT-CO1, MT-CO2 and MT-CO3, encoded in the mitochondrial DNA, and 11 supernumerary subunits COX4I1 (or COX4I2), COX5A, COX5B, COX6A2 (or COX6A1), COX6B1 (or COX6B2), COX6C, COX7A1 (or COX7A2), COX7B, COX7C, COX8B and NDUFA4, which are encoded in the nuclear genome. The complex exists as a monomer or a dimer and forms supercomplexes (SCs) in the inner mitochondrial membrane with NADH-ubiquinone oxidoreductase (complex I, CI) and ubiquinol-cytochrome c oxidoreductase (cytochrome b-c1 complex, complex III, CIII), resulting in different assemblies (supercomplex SCI(1)III(2)IV(1) and megacomplex MCI(2)III(2)IV(2)).

Its subcellular location is the mitochondrion inner membrane. Its pathway is energy metabolism; oxidative phosphorylation. Component of the mitochondrial respiratory complex IV (CIV, also named cytochrome c oxidase complex), the last enzyme in the mitochondrial electron transport chain which drives oxidative phosphorylation. The CIV complex is the component of the respiratory chain that catalyzes the reduction of oxygen to water. Acts as an assembly factor that specifically drives the homodimerization of CIV complexes, mediating the formation of mitochondrial respiratory supercomplexes (respirasomes) containing two CIV: supercomplxes with two molecules of CIV show improved activity. Despite being highly expressed in brown adipose tissue, not required for thermogenesis. This chain is Cytochrome c oxidase subunit 7A1, mitochondrial (COX7A1), found in Trachypithecus cristatus (Silvered leaf-monkey).